The following is a 247-amino-acid chain: uncharacterized protein (247 aa).

This is an uncharacterized protein from Rickettsia prowazekii (strain Madrid E).